An 813-amino-acid chain; its full sequence is LPS-assembly protein LptD (813 aa).

The segment at 1–29 (MTEQRRSPNNRALPSPAPTSVPARARRAG) is disordered. A signal peptide spans 1-52 (MTEQRRSPNNRALPSPAPTSVPARARRAGGLHAGALRPLVLAMASLSAGAHA).

Belongs to the LptD family. In terms of assembly, component of the lipopolysaccharide transport and assembly complex. Interacts with LptE and LptA.

Its subcellular location is the cell outer membrane. Its function is as follows. Together with LptE, is involved in the assembly of lipopolysaccharide (LPS) at the surface of the outer membrane. The chain is LPS-assembly protein LptD from Cupriavidus necator (strain ATCC 17699 / DSM 428 / KCTC 22496 / NCIMB 10442 / H16 / Stanier 337) (Ralstonia eutropha).